The primary structure comprises 176 residues: RNA pyrophosphohydrolase (176 aa).

The Nudix hydrolase domain occupies 6–149 (GYRPNVGIVI…KRDVYRRVMK (144 aa)). Residues 38-59 (GGINPGESAEQAMYRELFEEVG) carry the Nudix box motif.

Belongs to the Nudix hydrolase family. RppH subfamily. Requires a divalent metal cation as cofactor.

Functionally, accelerates the degradation of transcripts by removing pyrophosphate from the 5'-end of triphosphorylated RNA, leading to a more labile monophosphorylated state that can stimulate subsequent ribonuclease cleavage. This chain is RNA pyrophosphohydrolase, found in Salmonella arizonae (strain ATCC BAA-731 / CDC346-86 / RSK2980).